The following is a 501-amino-acid chain: Glucans biosynthesis protein G (501 aa).

An N-terminal signal peptide occupies residues 1 to 25; it reads MNRRQVLTGLAALPLLQAKPDPAAA.

Belongs to the OpgD/OpgG family.

The protein resides in the periplasm. It participates in glycan metabolism; osmoregulated periplasmic glucan (OPG) biosynthesis. Functionally, involved in the biosynthesis of osmoregulated periplasmic glucans (OPGs). The polypeptide is Glucans biosynthesis protein G (Rhodopseudomonas palustris (strain ATCC BAA-98 / CGA009)).